Reading from the N-terminus, the 230-residue chain is MHLLIPAAGSGKRMGSGHNKLLLNVLGQPLLSWTVQAALASQSIEWIGIMGQPYDFPAFEALLTPLHSPKPVQLIVGGDTRQQSVFNGIQALPPGAKFVLIHDGARCLATPDLFDRCTEALQHCQGLIAAMPVKDTIKIVNADGWITDTPDRQGLWGAQTPQGFDVALLKACHDKGKQEGWEVTDDAALLEKCGQPVKIVPGEDTNLKITTPVDLAIAEFILGQRSAKSA.

It belongs to the IspD/TarI cytidylyltransferase family. IspD subfamily.

The enzyme catalyses 2-C-methyl-D-erythritol 4-phosphate + CTP + H(+) = 4-CDP-2-C-methyl-D-erythritol + diphosphate. The protein operates within isoprenoid biosynthesis; isopentenyl diphosphate biosynthesis via DXP pathway; isopentenyl diphosphate from 1-deoxy-D-xylulose 5-phosphate: step 2/6. In terms of biological role, catalyzes the formation of 4-diphosphocytidyl-2-C-methyl-D-erythritol from CTP and 2-C-methyl-D-erythritol 4-phosphate (MEP). The protein is 2-C-methyl-D-erythritol 4-phosphate cytidylyltransferase of Synechocystis sp. (strain ATCC 27184 / PCC 6803 / Kazusa).